The following is a 381-amino-acid chain: E3 ubiquitin-protein ligase RNF133 (381 aa).

The PA domain maps to 65–167 (SSILKRVAGV…VKGMEILHLI (103 aa)). Residues 186-208 (WLNHYFVSFMIVTTATLAYFTFY) form a helical membrane-spanning segment. Residues 256–297 (CVICFEAYKPNEIVRILTCKHFFHKNCIDPWILAHGTCPMCK) form an RING-type; atypical zinc finger. A disordered region spans residues 340-381 (LPPARTSSKVTHVQEHPTSVNVGSQPPEAEETGHPSFGQHDL). Polar residues predominate over residues 344–363 (RTSSKVTHVQEHPTSVNVGS).

As to quaternary structure, interacts with E3 ligase UBE2J1. In terms of processing, auto-ubiquitinated.

The protein localises to the endoplasmic reticulum membrane. It catalyses the reaction S-ubiquitinyl-[E2 ubiquitin-conjugating enzyme]-L-cysteine + [acceptor protein]-L-lysine = [E2 ubiquitin-conjugating enzyme]-L-cysteine + N(6)-ubiquitinyl-[acceptor protein]-L-lysine.. It functions in the pathway protein modification; protein ubiquitination. Functionally, has E3 ubiquitin-protein ligase activity. Plays a role in male fecundity through the interaction with the E2 ubituitin-protein ligase UBE2J1. The chain is E3 ubiquitin-protein ligase RNF133 (Rnf133) from Rattus norvegicus (Rat).